Here is a 509-residue protein sequence, read N- to C-terminus: 2,3-bisphosphoglycerate-independent phosphoglycerate mutase (509 aa).

Residue D11 coordinates Mn(2+). Y35 is modified (phosphotyrosine). Residue S61 participates in Mn(2+) binding. S61 (phosphoserine intermediate) is an active-site residue. Residues H122, 152–153 (RD), R184, R190, 260–263 (RPDR), and K335 contribute to the substrate site. The Mn(2+) site is built by D402, H406, D443, H444, and H461.

It belongs to the BPG-independent phosphoglycerate mutase family. In terms of assembly, monomer. Mn(2+) serves as cofactor.

The enzyme catalyses (2R)-2-phosphoglycerate = (2R)-3-phosphoglycerate. Its pathway is carbohydrate degradation; glycolysis; pyruvate from D-glyceraldehyde 3-phosphate: step 3/5. Essential for rapid growth and for sporulation. Catalyzes the interconversion of 2-phosphoglycerate and 3-phosphoglycerate. The sequence is that of 2,3-bisphosphoglycerate-independent phosphoglycerate mutase from Bacillus cereus (strain ATCC 10987 / NRS 248).